A 152-amino-acid polypeptide reads, in one-letter code: SsrA-binding protein (152 aa).

Belongs to the SmpB family.

The protein localises to the cytoplasm. Required for rescue of stalled ribosomes mediated by trans-translation. Binds to transfer-messenger RNA (tmRNA), required for stable association of tmRNA with ribosomes. tmRNA and SmpB together mimic tRNA shape, replacing the anticodon stem-loop with SmpB. tmRNA is encoded by the ssrA gene; the 2 termini fold to resemble tRNA(Ala) and it encodes a 'tag peptide', a short internal open reading frame. During trans-translation Ala-aminoacylated tmRNA acts like a tRNA, entering the A-site of stalled ribosomes, displacing the stalled mRNA. The ribosome then switches to translate the ORF on the tmRNA; the nascent peptide is terminated with the 'tag peptide' encoded by the tmRNA and targeted for degradation. The ribosome is freed to recommence translation, which seems to be the essential function of trans-translation. In Rickettsia typhi (strain ATCC VR-144 / Wilmington), this protein is SsrA-binding protein.